Here is a 730-residue protein sequence, read N- to C-terminus: Translation factor GUF1 homolog, mitochondrial (730 aa).

Positions 106-289 constitute a tr-type G domain; that stretch reads ELIRNFCIIA…AVVVSIPPPK (184 aa). GTP-binding positions include 115–122, 182–186, and 236–239; these read AHVDHGKS, DTPGH, and NKID.

It belongs to the TRAFAC class translation factor GTPase superfamily. Classic translation factor GTPase family. LepA subfamily.

The protein resides in the mitochondrion inner membrane. The enzyme catalyses GTP + H2O = GDP + phosphate + H(+). Promotes mitochondrial protein synthesis. May act as a fidelity factor of the translation reaction, by catalyzing a one-codon backward translocation of tRNAs on improperly translocated ribosomes. Binds to mitochondrial ribosomes in a GTP-dependent manner. The chain is Translation factor GUF1 homolog, mitochondrial from Theileria annulata.